The chain runs to 405 residues: ATP phosphoribosyltransferase regulatory subunit (405 aa).

It belongs to the class-II aminoacyl-tRNA synthetase family. HisZ subfamily. In terms of assembly, heteromultimer composed of HisG and HisZ subunits.

It localises to the cytoplasm. It participates in amino-acid biosynthesis; L-histidine biosynthesis; L-histidine from 5-phospho-alpha-D-ribose 1-diphosphate: step 1/9. Its function is as follows. Required for the first step of histidine biosynthesis. May allow the feedback regulation of ATP phosphoribosyltransferase activity by histidine. The protein is ATP phosphoribosyltransferase regulatory subunit of Oceanobacillus iheyensis (strain DSM 14371 / CIP 107618 / JCM 11309 / KCTC 3954 / HTE831).